The sequence spans 276 residues: Ubiquinone biosynthesis protein coq11, mitochondrial (276 aa).

This sequence belongs to the NAD(P)-dependent epimerase/dehydratase family.

It localises to the mitochondrion. Acts in the coenzyme Q biosynthetic pathway. The chain is Ubiquinone biosynthesis protein coq11, mitochondrial from Schizosaccharomyces pombe (strain 972 / ATCC 24843) (Fission yeast).